Here is a 1033-residue protein sequence, read N- to C-terminus: TBC domain-containing protein kinase-like protein (1033 aa).

Disordered regions lie at residues 1 to 21 (MMKSDEGVSGNSNNNNNYKFK), 35 to 55 (YDNNNNNNNNNNNNDDNNTVT), and 81 to 101 (GSIGGSSSSSSTSNSVSTPKP). 2 stretches are compositionally biased toward low complexity: residues 36-52 (DNNNNNNNNNNNNDDNN) and 81-97 (GSIGGSSSSSSTSNSVS). Residues 72–425 (NKLTINQNNG…SETLLDHPYF (354 aa)) form the Protein kinase domain. ATP-binding positions include 78–86 (QNNGSIGGS) and lysine 113. Residues 535–546 (STNSGLNSPQPY) show a composition bias toward polar residues. The disordered stretch occupies residues 535-560 (STNSGLNSPQPYQHQHHQHQHQHQHP). The span at 548–558 (HQHHQHQHQHQ) shows a compositional bias: basic residues. The Rab-GAP TBC domain maps to 657–844 (FVPPILRGDI…ILWDSILLCP (188 aa)).

Belongs to the protein kinase superfamily. Ser/Thr protein kinase family.

The sequence is that of TBC domain-containing protein kinase-like protein (tbck) from Dictyostelium discoideum (Social amoeba).